Reading from the N-terminus, the 1259-residue chain is Translocation and assembly module subunit TamB (1259 aa).

Met-1 carries the N-formylmethionine modification. Topologically, residues Met-1–Lys-6 are cytoplasmic. Residues Ile-7–Gly-27 traverse the membrane as a helical; Signal-anchor for type II membrane protein segment. The Periplasmic portion of the chain corresponds to Thr-28–Phe-1259.

This sequence belongs to the TamB family. Interacts with TamA to form the translocation and assembly module (TAM).

The protein resides in the cell inner membrane. Component of the translocation and assembly module (TAM), which facilitates the insertion and assembly of specific beta-barrel proteins into the outer membrane. Promotes the assembly and secretion across the outer membrane of a subset of autotransporters, such as Ag43. Involved in the assembly of the outer membrane usher protein FimD. In vitro, when TAM is reconstituted into preformed liposomes, it can promote the assembly of several outer membrane proteins, including OmpA, EspP, Ag43 and FadL. TamA is sufficient to catalyze a low level of outer membrane protein (OMP) assembly, but both TamA and TamB are required for efficient OMP assembly. TamB may regulate TamA activity. It could regulate conformational changes in TamA to drive its function in OMP assembly. It could also act as a chaperone that facilitate the transport of nascent membrane proteins across the periplasm to TamA in the outer membrane. Functionally, in addition, is involved in outer membrane lipid homeostasis. Likely transports phospholipids between the inner membrane and the outer membrane. It would provide a bridge-like structure that protects phospholipids as they travel across the periplasm. One possible explanation for the apparent dual function of TAM is that TamB is a somewhat generic transporter of hydrophobic molecules. In terms of biological role, tamB, YdbH and YhdP are redundant, but not equivalent, in performing an essential function for growth and maintaining lipid homeostasis in the outer membrane. The transport functions of TamB and YhdP could be differentiated according to the fatty acid saturation state of the phospholipids, with TamB transporting more unsaturated phospholipids and YhdP more saturated phospholipids. Any of these three proteins is sufficient for growth. The sequence is that of Translocation and assembly module subunit TamB from Escherichia coli (strain K12).